A 254-amino-acid chain; its full sequence is Ribosomal RNA small subunit methyltransferase J (254 aa).

Residues 106-107 (RD) and Asp-177 contribute to the S-adenosyl-L-methionine site.

Belongs to the methyltransferase superfamily. RsmJ family.

It localises to the cytoplasm. It carries out the reaction guanosine(1516) in 16S rRNA + S-adenosyl-L-methionine = N(2)-methylguanosine(1516) in 16S rRNA + S-adenosyl-L-homocysteine + H(+). In terms of biological role, specifically methylates the guanosine in position 1516 of 16S rRNA. The chain is Ribosomal RNA small subunit methyltransferase J from Nitrosococcus oceani (strain ATCC 19707 / BCRC 17464 / JCM 30415 / NCIMB 11848 / C-107).